Consider the following 282-residue polypeptide: Phosphoglucan phosphatase LSF2, chloroplastic (282 aa).

Residues 1 to 61 constitute a chloroplast transit peptide; the sequence is MSVIGSKSCI…GENPGTNGVS (61 aa). Substrate is bound by residues Y83, 153 to 156, D161, and 177 to 180; these read RHMR and SLEW. In terms of domain architecture, Tyrosine-protein phosphatase spans 92-249; it reads NYTLIRDELI…TYDLAKNDPW (158 aa). C193 (phosphocysteine intermediate) is an active-site residue. Residues 193–199 carry the Glucan phosphatase signature motif CXAGXGR motif; that stretch reads CSAGLGR. Substrate contacts are provided by residues 194–199, G230, K245, E251, 259–263, and E268; these read SAGLGR and NAFED.

As to expression, widely expressed.

Its subcellular location is the plastid. The protein resides in the chloroplast. Its function is as follows. Starch-associated phosphoglucan phosphatase that selectively dephosphorylates the glucan C3 position. Probably participates in the regulation of starch degradation. In Arabidopsis thaliana (Mouse-ear cress), this protein is Phosphoglucan phosphatase LSF2, chloroplastic (LSF2).